Consider the following 484-residue polypeptide: Glutamyl-tRNA(Gln) amidotransferase subunit A (484 aa).

Residues Lys76 and Ser151 each act as charge relay system in the active site. Ser175 serves as the catalytic Acyl-ester intermediate.

The protein belongs to the amidase family. GatA subfamily. As to quaternary structure, heterotrimer of A, B and C subunits.

It carries out the reaction L-glutamyl-tRNA(Gln) + L-glutamine + ATP + H2O = L-glutaminyl-tRNA(Gln) + L-glutamate + ADP + phosphate + H(+). Allows the formation of correctly charged Gln-tRNA(Gln) through the transamidation of misacylated Glu-tRNA(Gln) in organisms which lack glutaminyl-tRNA synthetase. The reaction takes place in the presence of glutamine and ATP through an activated gamma-phospho-Glu-tRNA(Gln). This chain is Glutamyl-tRNA(Gln) amidotransferase subunit A, found in Thioalkalivibrio sulfidiphilus (strain HL-EbGR7).